The sequence spans 520 residues: Dihydropyrimidinase 2 (520 aa).

The Zn(2+) site is built by His-59, His-61, and Lys-152. Lys-152 bears the N6-carboxylysine mark. Residue Tyr-157 participates in substrate binding. Residues His-185 and His-241 each coordinate Zn(2+). Ser-291 provides a ligand contact to substrate. Zn(2+) is bound at residue Asp-319. Substrate is bound at residue Asn-340.

The protein belongs to the metallo-dependent hydrolases superfamily. Hydantoinase/dihydropyrimidinase family. In terms of assembly, homotetramer. Zn(2+) is required as a cofactor. In terms of processing, carboxylation allows a single lysine to coordinate two zinc ions. In terms of tissue distribution, body wall muscles.

It carries out the reaction 5,6-dihydrouracil + H2O = 3-(carbamoylamino)propanoate + H(+). This Caenorhabditis elegans protein is Dihydropyrimidinase 2 (dhp-2).